Reading from the N-terminus, the 208-residue chain is Large ribosomal subunit protein uL4 (208 aa).

The tract at residues 42–77 (SMRQGTHKTKTKTEVSGGGRKPWRQKGTGRARQGSI) is disordered.

It belongs to the universal ribosomal protein uL4 family. As to quaternary structure, part of the 50S ribosomal subunit.

Functionally, one of the primary rRNA binding proteins, this protein initially binds near the 5'-end of the 23S rRNA. It is important during the early stages of 50S assembly. It makes multiple contacts with different domains of the 23S rRNA in the assembled 50S subunit and ribosome. In terms of biological role, forms part of the polypeptide exit tunnel. The polypeptide is Large ribosomal subunit protein uL4 (Spiroplasma kunkelii).